Reading from the N-terminus, the 414-residue chain is Snake venom metalloproteinase atrolysin-D (414 aa).

An N-terminal signal peptide occupies residues 1 to 20; the sequence is MIEVLLVTICLAVFPYQGSS. The propeptide occupies 21 to 190; sequence IILESGNVND…KASDLNLNPD (170 aa). Glutamine 191 carries the post-translational modification Pyrrolidone carboxylic acid. Residues 197–393 form the Peptidase M12B domain; sequence RYIELVVVAD…YKPQCILNKP (197 aa). The Ca(2+) site is built by glutamate 200 and aspartate 284. 2 disulfides stabilise this stretch: cysteine 308/cysteine 388 and cysteine 348/cysteine 355. Histidine 333 is a binding site for Zn(2+). Glutamate 334 is an active-site residue. Residues histidine 337 and histidine 343 each coordinate Zn(2+). Residues cysteine 388 and asparagine 391 each coordinate Ca(2+). Residues 394-414 constitute a propeptide that is removed on maturation; the sequence is LRIDPVSTPVSGNELLEAGEE.

It belongs to the venom metalloproteinase (M12B) family. P-I subfamily. As to quaternary structure, monomer. Zn(2+) serves as cofactor. In terms of processing, the N-terminus is blocked. As to expression, expressed by the venom gland.

It is found in the secreted. It carries out the reaction Cleavage of 5-His-|-Leu-6, 10-His-|-Leu-11, 14-Ala-|-Leu-15, 16-Tyr-|-Leu-17 and 23-Gly-|-Phe-24 of insulin B chain. With small molecule substrates prefers hydrophobic residue at P2' and small residue such as Ala, Gly at P1.. Snake venom zinc metalloproteinase that causes hemorrhage by provoking the degradation of the sub-endothelial matrix proteins (fibronectin, laminin, type IV collagen, nidogen, and gelatins). The polypeptide is Snake venom metalloproteinase atrolysin-D (Crotalus atrox (Western diamondback rattlesnake)).